The primary structure comprises 324 residues: uncharacterized protein (324 aa).

Residues 1 to 58 (MDIKVMEYAAEIARRQSFTKAAEHLHIAQPSLSQQIKKLEAELGLTLFHRSHGSVTLT) enclose the HTH lysR-type domain. The H-T-H motif DNA-binding region spans 18 to 37 (FTKAAEHLHIAQPSLSQQIK).

It belongs to the LysR transcriptional regulatory family.

This is an uncharacterized protein from Bacillus subtilis (strain 168).